A 447-amino-acid chain; its full sequence is Tubulin beta chain (447 aa).

Residues Gln11, Glu69, Ser138, Gly142, Thr143, Gly144, Asn204, and Asn226 each coordinate GTP. Glu69 is a Mg(2+) binding site. Residues 427–447 form a disordered region; that stretch reads EAHMDDEEAEEAYEDEAPPEE. Over residues 430 to 447 the composition is skewed to acidic residues; the sequence is MDDEEAEEAYEDEAPPEE.

This sequence belongs to the tubulin family. As to quaternary structure, dimer of alpha and beta chains. A typical microtubule is a hollow water-filled tube with an outer diameter of 25 nm and an inner diameter of 15 nM. Alpha-beta heterodimers associate head-to-tail to form protofilaments running lengthwise along the microtubule wall with the beta-tubulin subunit facing the microtubule plus end conferring a structural polarity. Microtubules usually have 13 protofilaments but different protofilament numbers can be found in some organisms and specialized cells. Mg(2+) serves as cofactor.

Its subcellular location is the cytoplasm. The protein localises to the cytoskeleton. Functionally, tubulin is the major constituent of microtubules, a cylinder consisting of laterally associated linear protofilaments composed of alpha- and beta-tubulin heterodimers. Microtubules grow by the addition of GTP-tubulin dimers to the microtubule end, where a stabilizing cap forms. Below the cap, tubulin dimers are in GDP-bound state, owing to GTPase activity of alpha-tubulin. This chain is Tubulin beta chain (TBB1), found in Uromyces fabae (Rust fungus).